The primary structure comprises 216 residues: Urease accessory protein UreG (216 aa).

25-32 (GPVGSGKT) lines the GTP pocket.

The protein belongs to the SIMIBI class G3E GTPase family. UreG subfamily. As to quaternary structure, homodimer. UreD, UreF and UreG form a complex that acts as a GTP-hydrolysis-dependent molecular chaperone, activating the urease apoprotein by helping to assemble the nickel containing metallocenter of UreC. The UreE protein probably delivers the nickel.

The protein localises to the cytoplasm. Its function is as follows. Facilitates the functional incorporation of the urease nickel metallocenter. This process requires GTP hydrolysis, probably effectuated by UreG. The protein is Urease accessory protein UreG of Burkholderia thailandensis (strain ATCC 700388 / DSM 13276 / CCUG 48851 / CIP 106301 / E264).